We begin with the raw amino-acid sequence, 205 residues long: 3-demethoxyubiquinol 3-hydroxylase (205 aa).

Positions 54, 84, 87, 136, 168, and 171 each coordinate Fe cation.

The protein belongs to the COQ7 family. Fe cation is required as a cofactor.

It is found in the cell membrane. It catalyses the reaction a 5-methoxy-2-methyl-3-(all-trans-polyprenyl)benzene-1,4-diol + AH2 + O2 = a 3-demethylubiquinol + A + H2O. It functions in the pathway cofactor biosynthesis; ubiquinone biosynthesis. Its function is as follows. Catalyzes the hydroxylation of 2-nonaprenyl-3-methyl-6-methoxy-1,4-benzoquinol during ubiquinone biosynthesis. The protein is 3-demethoxyubiquinol 3-hydroxylase of Acidovorax sp. (strain JS42).